The chain runs to 421 residues: EGFR adapter protein (421 aa).

Disordered regions lie at residues 18–94 (TFIS…PQLQ), 109–154 (DVQE…RLVD), 173–194 (EDSR…SGCG), and 372–396 (PVPL…AGGT). Over residues 21–30 (SSSSASSSSS) the composition is skewed to low complexity. Over residues 62–89 (FFHHHHPPAHPHPPRQQPHPHSHSHPHP) the composition is skewed to basic residues. Positions 109–120 (DVQELSGQEHPH) are enriched in basic and acidic residues. Positions 181–194 (STCGSSLTSGSGCG) are enriched in low complexity. The 94-residue stretch at 286 to 379 (WFQAGIPREI…LLPVPLTLPR (94 aa)) folds into the SH2 domain.

In terms of assembly, may interact (via SH2 domain) with Egfr (when phosphorylated). Detected along the wing margin, with high levels of expression in two stripes of cells on either side of the dorsal/ventral boundary and lower levels of expression in a small region at the anteroposterior boundary (at protein level). High levels of expression along two parallel stripes of cells on either side of the wing pouch dorsal/ventral boundary, and slightly lower levels of expression in a region either side of the anteroposterior boundary. Also expressed in discrete regions of the wing imaginal disk outside of the pouch. Expressed in eye imaginal disk photoreceptors with highest levels of expression in R7 photoreceptor cells.

Involved in the negative regulation of the Egfr/Ras signaling pathway. During wing morphogenesis, may function redundantly with PVRAP to inhibit Egfr activity and prevent uncontrolled cell growth. The sequence is that of EGFR adapter protein from Drosophila melanogaster (Fruit fly).